Reading from the N-terminus, the 393-residue chain is Biotin synthase, mitochondrial (393 aa).

Residues 1–20 constitute a mitochondrion transit peptide; sequence MSVSFTRSFPRAFIRSYGTV. The Radical SAM core domain occupies 81 to 310; the sequence is SAIQMCTLMN…ATIVRLAAGR (230 aa). [4Fe-4S] cluster-binding residues include cysteine 96, cysteine 100, and cysteine 103. 4 residues coordinate [2Fe-2S] cluster: cysteine 140, cysteine 173, cysteine 233, and arginine 305. The interval 366–393 is disordered; the sequence is NAATPQQHVDSVAHESEKNPAAPAAEAL.

This sequence belongs to the radical SAM superfamily. Biotin synthase family. [4Fe-4S] cluster is required as a cofactor. [2Fe-2S] cluster serves as cofactor.

The protein localises to the mitochondrion. It catalyses the reaction (4R,5S)-dethiobiotin + (sulfur carrier)-SH + 2 reduced [2Fe-2S]-[ferredoxin] + 2 S-adenosyl-L-methionine = (sulfur carrier)-H + biotin + 2 5'-deoxyadenosine + 2 L-methionine + 2 oxidized [2Fe-2S]-[ferredoxin]. The protein operates within cofactor biosynthesis; biotin biosynthesis; biotin from 7,8-diaminononanoate: step 2/2. Biotin synthase; part of the cluster involved in the biosynthesis of biotin (also known as vitamin B8 or vitamin H), a water-soluble vitamin that functions as a prosthetic group of many carboxylases, such as acetyl-CoA carboxylase and pyruvate carboxylase. Catalyzes the conversion of dethiobiotin (DTB) to biotin by the insertion of a sulfur atom into dethiobiotin via a radical-based mechanism. This chain is Biotin synthase, mitochondrial, found in Emericella nidulans (strain FGSC A4 / ATCC 38163 / CBS 112.46 / NRRL 194 / M139) (Aspergillus nidulans).